The sequence spans 553 residues: Dihydroxy-acid dehydratase (553 aa).

D78 contributes to the Mg(2+) binding site. C119 is a binding site for [2Fe-2S] cluster. Residues D120 and K121 each coordinate Mg(2+). K121 is subject to N6-carboxylysine. C193 is a binding site for [2Fe-2S] cluster. E441 serves as a coordination point for Mg(2+). Residue S467 is the Proton acceptor of the active site.

Belongs to the IlvD/Edd family. As to quaternary structure, homodimer. [2Fe-2S] cluster is required as a cofactor. The cofactor is Mg(2+).

The catalysed reaction is (2R)-2,3-dihydroxy-3-methylbutanoate = 3-methyl-2-oxobutanoate + H2O. The enzyme catalyses (2R,3R)-2,3-dihydroxy-3-methylpentanoate = (S)-3-methyl-2-oxopentanoate + H2O. Its pathway is amino-acid biosynthesis; L-isoleucine biosynthesis; L-isoleucine from 2-oxobutanoate: step 3/4. It functions in the pathway amino-acid biosynthesis; L-valine biosynthesis; L-valine from pyruvate: step 3/4. Its function is as follows. Functions in the biosynthesis of branched-chain amino acids. Catalyzes the dehydration of (2R,3R)-2,3-dihydroxy-3-methylpentanoate (2,3-dihydroxy-3-methylvalerate) into 2-oxo-3-methylpentanoate (2-oxo-3-methylvalerate) and of (2R)-2,3-dihydroxy-3-methylbutanoate (2,3-dihydroxyisovalerate) into 2-oxo-3-methylbutanoate (2-oxoisovalerate), the penultimate precursor to L-isoleucine and L-valine, respectively. This is Dihydroxy-acid dehydratase from Geotalea daltonii (strain DSM 22248 / JCM 15807 / FRC-32) (Geobacter daltonii).